Reading from the N-terminus, the 314-residue chain is Nodulation protein D 2 (314 aa).

An HTH lysR-type domain is found at 6–63; it reads LDLNLLVVLDALMTERNLTAAARSINLSQPAMSAAVARLRTNFRDDLFAMAGREFIPT. The segment at residues 23–42 is a DNA-binding region (H-T-H motif); it reads LTAAARSINLSQPAMSAAVA.

This sequence belongs to the LysR transcriptional regulatory family.

In terms of biological role, nodD regulates the expression of the nodABCFE genes which encode other nodulation proteins. NodD is also a negative regulator of its own expression. Binds flavonoids as inducers. This is Nodulation protein D 2 (nodD2) from Rhizobium tropici.